Reading from the N-terminus, the 648-residue chain is Replication restart protein PriA (648 aa).

Positions 131–297 (TILNESNKPT…EIGKYQLVTL (167 aa)) constitute a Helicase ATP-binding domain. 144–151 (GVTGSGKT) is an ATP binding site. The DEAH box signature appears at 240–243 (DEEH). Zn(2+)-binding residues include Cys358, Cys361, Cys367, Cys370, Cys385, Cys388, Cys398, and Cys401. Positions 393–548 (KIFSSCPECL…SFFANELEIR (156 aa)) constitute a Helicase C-terminal domain.

Belongs to the helicase family. PriA subfamily. In terms of assembly, component of the replication restart primosome. It depends on Zn(2+) as a cofactor.

It catalyses the reaction Couples ATP hydrolysis with the unwinding of duplex DNA by translocating in the 3'-5' direction.. It carries out the reaction ATP + H2O = ADP + phosphate + H(+). Functionally, initiates the restart of stalled replication forks, which reloads the replicative helicase on sites other than the origin of replication. Recognizes and binds to abandoned replication forks and remodels them to uncover a helicase loading site. Promotes assembly of the primosome at these replication forks. The chain is Replication restart protein PriA from Rickettsia conorii (strain ATCC VR-613 / Malish 7).